Reading from the N-terminus, the 954-residue chain is Glycine dehydrogenase (decarboxylating) (954 aa).

Lys701 is subject to N6-(pyridoxal phosphate)lysine.

This sequence belongs to the GcvP family. The glycine cleavage system is composed of four proteins: P, T, L and H. It depends on pyridoxal 5'-phosphate as a cofactor.

The enzyme catalyses N(6)-[(R)-lipoyl]-L-lysyl-[glycine-cleavage complex H protein] + glycine + H(+) = N(6)-[(R)-S(8)-aminomethyldihydrolipoyl]-L-lysyl-[glycine-cleavage complex H protein] + CO2. Its function is as follows. The glycine cleavage system catalyzes the degradation of glycine. The P protein binds the alpha-amino group of glycine through its pyridoxal phosphate cofactor; CO(2) is released and the remaining methylamine moiety is then transferred to the lipoamide cofactor of the H protein. The chain is Glycine dehydrogenase (decarboxylating) from Bordetella pertussis (strain Tohama I / ATCC BAA-589 / NCTC 13251).